We begin with the raw amino-acid sequence, 228 residues long: C-type lectin domain-containing protein 88 (228 aa).

The signal sequence occupies residues methionine 1–alanine 18. The O-linked (Xyl...) (chondroitin sulfate) serine glycan is linked to serine 27. The C-type lectin domain maps to tyrosine 88–glutamate 218. Cystine bridges form between cysteine 109–cysteine 217 and cysteine 188–cysteine 209. N-linked (GlcNAc...) asparagine glycosylation occurs at asparagine 220.

This is C-type lectin domain-containing protein 88 from Caenorhabditis elegans.